The primary structure comprises 91 residues: Probable Fe(2+)-trafficking protein (91 aa).

The protein belongs to the Fe(2+)-trafficking protein family.

In terms of biological role, could be a mediator in iron transactions between iron acquisition and iron-requiring processes, such as synthesis and/or repair of Fe-S clusters in biosynthetic enzymes. The sequence is that of Probable Fe(2+)-trafficking protein from Burkholderia cenocepacia (strain ATCC BAA-245 / DSM 16553 / LMG 16656 / NCTC 13227 / J2315 / CF5610) (Burkholderia cepacia (strain J2315)).